Reading from the N-terminus, the 79-residue chain is Putative membrane protein insertion efficiency factor (79 aa).

It belongs to the UPF0161 family.

It is found in the cell inner membrane. Its function is as follows. Could be involved in insertion of integral membrane proteins into the membrane. The chain is Putative membrane protein insertion efficiency factor from Cytophaga hutchinsonii (strain ATCC 33406 / DSM 1761 / CIP 103989 / NBRC 15051 / NCIMB 9469 / D465).